The primary structure comprises 356 residues: Tyrosine recombinase XerS (356 aa).

Residues 16 to 121 (IMPWYVLDYY…ALSSLYKYLT (106 aa)) form the Core-binding (CB) domain. The Tyr recombinase domain occupies 169-354 (AFLDYVDKEY…VNDEQKNALD (186 aa)). Residues arginine 210, lysine 234, histidine 306, arginine 309, and histidine 332 contribute to the active site. Tyrosine 341 acts as the O-(3'-phospho-DNA)-tyrosine intermediate in catalysis.

The protein belongs to the 'phage' integrase family. XerS subfamily.

It is found in the cytoplasm. Its activity is regulated as follows. FtsK is required for recombination. Functionally, site-specific tyrosine recombinase, which acts by catalyzing the cutting and rejoining of the recombining DNA molecules. Essential to convert dimers of the bacterial chromosome into monomers to permit their segregation at cell division. This Streptococcus pyogenes serotype M6 (strain ATCC BAA-946 / MGAS10394) protein is Tyrosine recombinase XerS.